The following is a 787-amino-acid chain: MQFSYSWLKTQANPDLSADKLEHLLTMAGLEVEEIDTAAPAFSGVVVAEVKSVEKHPDADRLNVTQVDAGTGELVQIVCGAPNVKPGIKVPCSLPVAVLPGNFKIKPTKMRGVPSNGMLCSTNELGLPDDGVDGLHILPEDAPVGTNIREYLDLDDMLFTLKITPNRADCLSVKGIAREVSALTQCAFTPVEIQTAPIGSEKKQAVRIDAPADCGRFISRVIENVNAKAATPDWMKQRLERSGIRSISALVDIGNYVMLEIGQPMHVFDADKLSGSLIVRRAQNGETLACLNEKTVTLADNTLVVADEKGALSLAGLMGGAASAVSDGTQNIVLEAAWFEPEIIVGKSRQYGFGSDSSFRFERGVDYRLQADAIERATELVLQICGGAAGEMVEAQGKLPEAKQVGLRLGRLKTVLGVDIPAEQVETILQHLGLQPEKTAEGFRITAPSFRFDIEIEADLIEEIGRVYGYENIPDDYTSGRLKMSELPETRRPRFAVYNEMAARGYREVISYAFVDEQWELDFAANAAPIRLQNPLAAQYAVMRSTLIGGLVEILQNNLNRKQNRVRVFEIACVFGKGSDGRFVQNERIGGLWYGAAMPEQWGEKTRNADFYDIKADVENLLKNKAVEFVKTGHPALHPGRAANIVSDGKVIGFVGELHPKWLQKYDLPQAPLVFEIDMAAVLECGKTRYRAVSKFQPVRRDLAFVMPEVMNHDDLLLVLKGAANKLVQEISVFDVYRGTGLPEGMKSVAVKVILQDMENTLTDEAVEPLIGKLIGVATEAGARLRS.

The tRNA-binding domain occupies 39–149 (APAFSGVVVA…EDAPVGTNIR (111 aa)). The B5 domain occupies 400–475 (PEAKQVGLRL…RVYGYENIPD (76 aa)). Positions 453, 459, 462, and 463 each coordinate Mg(2+). One can recognise an FDX-ACB domain in the interval 694–786 (SKFQPVRRDL…VATEAGARLR (93 aa)).

This sequence belongs to the phenylalanyl-tRNA synthetase beta subunit family. Type 1 subfamily. Tetramer of two alpha and two beta subunits. Mg(2+) serves as cofactor.

Its subcellular location is the cytoplasm. It catalyses the reaction tRNA(Phe) + L-phenylalanine + ATP = L-phenylalanyl-tRNA(Phe) + AMP + diphosphate + H(+). This is Phenylalanine--tRNA ligase beta subunit from Neisseria gonorrhoeae (strain ATCC 700825 / FA 1090).